The chain runs to 449 residues: MSHITFDYSKVLESFAGQHEIDFLQGQVTEADKLLREGTGPGSDFLGWLDLPENYDKDEFARILTAAEKIKADSEVLVVIGIGGSYLGAKAAIDFLNHHFANLQTAKERKAPQILYAGNSISSTYLADLVEYVQDKEFSVNVISKSGTTTEPAIAFRVFKELLVKKYGQEEANKRIYATTDKVKGAVKVEADANNWETFVVPDNVGGRFSVLTAVGLLPIAASGADITALMEGANAARKDLSSDKISENIAYQYAAVRNVLYRKGYITEILANYEPSLQYFGEWWKQLAGESEGKDQKGIYPTSANFSTDLHSLGQFIQEGYRNLFETVIRVDNPRKNVIIPELAEDLDGLGYLQGKDVDFVNKKATDGVLLAHTDGGVPNMFVTLPAQDEFTLGYTIYFFELAIAVSGYMNAVNPFDQPGVEAYKRNMFALLGKPGFEALSAELNARL.

Glu291 (proton donor) is an active-site residue. Active-site residues include His312 and Lys426.

Belongs to the GPI family.

Its subcellular location is the cytoplasm. It catalyses the reaction alpha-D-glucose 6-phosphate = beta-D-fructose 6-phosphate. The protein operates within carbohydrate biosynthesis; gluconeogenesis. Its pathway is carbohydrate degradation; glycolysis; D-glyceraldehyde 3-phosphate and glycerone phosphate from D-glucose: step 2/4. Functionally, catalyzes the reversible isomerization of glucose-6-phosphate to fructose-6-phosphate. The sequence is that of Glucose-6-phosphate isomerase from Streptococcus pyogenes serotype M1.